Here is a 348-residue protein sequence, read N- to C-terminus: MKETKITYKDAGVDIDAGNTFVQMIKPLVKATSRPEVLADIGGFGGLFSLNMGKYKHPVLVSGTDGVGTKLKLAFLADRHDTIGIDLVAMCVNDIIVQGAEPLFFLDYLATAKLDPAKAASIIKGVSEGCVQAGCALIGGETAEMPGFYTGDEYDMAGFAVGVVEREKIIDGSSITVGNRLIGLASSGLHSNGYSLARKVILEHMGLGIDDQLPGLGKTVAEELLTPTRIYVRSVMNLLRDFNVSGLAHITGGGLLENIPRVLPNGCKAVIKKDSWDVPEIFRIMQKAGNIEENEMFRTFNCGIGMVLVVPEKESEEIMIRLSGLNETAFVIGEVAKCDAGKECVDLV.

This sequence belongs to the AIR synthase family.

It localises to the cytoplasm. The enzyme catalyses 2-formamido-N(1)-(5-O-phospho-beta-D-ribosyl)acetamidine + ATP = 5-amino-1-(5-phospho-beta-D-ribosyl)imidazole + ADP + phosphate + H(+). Its pathway is purine metabolism; IMP biosynthesis via de novo pathway; 5-amino-1-(5-phospho-D-ribosyl)imidazole from N(2)-formyl-N(1)-(5-phospho-D-ribosyl)glycinamide: step 2/2. The polypeptide is Phosphoribosylformylglycinamidine cyclo-ligase (Citrifermentans bemidjiense (strain ATCC BAA-1014 / DSM 16622 / JCM 12645 / Bem) (Geobacter bemidjiensis)).